The sequence spans 152 residues: Small ribosomal subunit protein uS19z (152 aa).

The protein belongs to the universal ribosomal protein uS19 family.

It is found in the cytoplasm. This chain is Small ribosomal subunit protein uS19z (RPS15B), found in Arabidopsis thaliana (Mouse-ear cress).